The following is a 118-amino-acid chain: UPF0102 protein RHA1_ro06551 (118 aa).

Belongs to the UPF0102 family.

This Rhodococcus jostii (strain RHA1) protein is UPF0102 protein RHA1_ro06551.